The primary structure comprises 254 residues: MFKKLIKKNKNQPIQSEFGLDLHNIPEHVAIIMDGNGRWAKQRKLPRIKGHYQGMQTVKKITKVASDIGIKYLTLYAFSTENWTRPENEVNYIMNLPVNFLKTFLPELIENNVKVETIGFMEYLPSSTLKAIAKAKEDTKDNTGLKLIFAINYGGRAEILNSVKTIYDELTAKGLTSDDITEQMIDDHLMTHAYPDPDLLIRTSGEQRISNFLIWQVSYSEFIFNEKLWPDFDKEELINCIKIYQSRQRRFGGL.

The active site involves Asp34. Asp34 lines the Mg(2+) pocket. Substrate is bound by residues 35–38, Trp39, Arg47, His51, and 79–81; these read GNGR and STE. The active-site Proton acceptor is the Asn82. Substrate contacts are provided by residues Trp83, Arg85, Arg202, and 208 to 210; that span reads RIS. Glu221 lines the Mg(2+) pocket.

Belongs to the UPP synthase family. In terms of assembly, homodimer. It depends on Mg(2+) as a cofactor.

Functionally, catalyzes the condensation of isopentenyl diphosphate (IPP) with allylic pyrophosphates generating different type of terpenoids. The sequence is that of Isoprenyl transferase from Staphylococcus saprophyticus subsp. saprophyticus (strain ATCC 15305 / DSM 20229 / NCIMB 8711 / NCTC 7292 / S-41).